A 342-amino-acid polypeptide reads, in one-letter code: S-adenosylmethionine:tRNA ribosyltransferase-isomerase (342 aa).

This sequence belongs to the QueA family. Monomer.

Its subcellular location is the cytoplasm. It carries out the reaction 7-aminomethyl-7-carbaguanosine(34) in tRNA + S-adenosyl-L-methionine = epoxyqueuosine(34) in tRNA + adenine + L-methionine + 2 H(+). The protein operates within tRNA modification; tRNA-queuosine biosynthesis. Functionally, transfers and isomerizes the ribose moiety from AdoMet to the 7-aminomethyl group of 7-deazaguanine (preQ1-tRNA) to give epoxyqueuosine (oQ-tRNA). The polypeptide is S-adenosylmethionine:tRNA ribosyltransferase-isomerase (Streptococcus pneumoniae serotype 19F (strain G54)).